We begin with the raw amino-acid sequence, 715 residues long: MIYEGKAITVKALESGIVELKFDLKGESVNKFNRLTLNELRQAVDAIRADASVKGVIVSSGKDVFIVGADITEFVDNFKLPEAELVAGNLEANRIFNAFEDLEVPTVAAINGIALGGGLEMCLAADYRVMSTSARIGLPEVKLGIYPGFGGTVRLPRLIGSDNAIEWIAAGKENRAEDALKVGAVDAVVAPELLLAGALDLIKRAISGELDYKAKRQPKLEKLKLNAIEQMMAFETAKGFVAGQAGPNYPAPVEAIKSIQKAANFGRDKALEVEAAGFAKLAKTSVAESLIGLFLNDQELKRKAKAHDEIAHDVKQAAVLGAGIMGGGIAYQSAVKGTPILMKDIREEAIQLGLNEASKLLGNRVEKGRLTPAKMAEALNAIRPTLSYGDFANVDIVVEAVVENPKVKQAVLAEVEGQVKDDAILASNTSTISINLLAKALKRPENFVGMHFFNPVHMMPLVEVIRGEKSSDVAVATTVAYAKKMGKNPIVVNDCPGFLVNRVLFPYFGGFAKLVSAGVDFVRIDKVMEKFGWPMGPAYLMDVVGIDTGHHGRDVMAEGFPDRMKDERRSAVDALYESNRLGQKNGKGFYAYETDKRGKPKKVFDATVLDVLKPIVFEQREVTDEDIINWMMVPLCLETVRCLEDGIVETAAEADMGLVYGIGFPPFRGGALRYIDSIGVAEFVALADQYADLGPLYHPTAKLREMAKNGQRFFN.

The enoyl-CoA hydratase/isomerase stretch occupies residues 1 to 190 (MIYEGKAITV…KVGAVDAVVA (190 aa)). Aspartate 297 lines the substrate pocket. A 3-hydroxyacyl-CoA dehydrogenase region spans residues 312–715 (HDVKQAAVLG…MAKNGQRFFN (404 aa)). Residues methionine 325, aspartate 344, 401-403 (VVE), lysine 408, and serine 430 contribute to the NAD(+) site. Residue histidine 451 is the For 3-hydroxyacyl-CoA dehydrogenase activity of the active site. An NAD(+)-binding site is contributed by asparagine 454. Residues asparagine 501 and tyrosine 660 each coordinate substrate.

This sequence in the N-terminal section; belongs to the enoyl-CoA hydratase/isomerase family. In the C-terminal section; belongs to the 3-hydroxyacyl-CoA dehydrogenase family. As to quaternary structure, heterotetramer of two alpha chains (FadB) and two beta chains (FadA).

The catalysed reaction is a (3S)-3-hydroxyacyl-CoA + NAD(+) = a 3-oxoacyl-CoA + NADH + H(+). The enzyme catalyses a (3S)-3-hydroxyacyl-CoA = a (2E)-enoyl-CoA + H2O. It catalyses the reaction a 4-saturated-(3S)-3-hydroxyacyl-CoA = a (3E)-enoyl-CoA + H2O. It carries out the reaction (3S)-3-hydroxybutanoyl-CoA = (3R)-3-hydroxybutanoyl-CoA. The catalysed reaction is a (3Z)-enoyl-CoA = a 4-saturated (2E)-enoyl-CoA. The enzyme catalyses a (3E)-enoyl-CoA = a 4-saturated (2E)-enoyl-CoA. Its pathway is lipid metabolism; fatty acid beta-oxidation. In terms of biological role, involved in the aerobic and anaerobic degradation of long-chain fatty acids via beta-oxidation cycle. Catalyzes the formation of 3-oxoacyl-CoA from enoyl-CoA via L-3-hydroxyacyl-CoA. It can also use D-3-hydroxyacyl-CoA and cis-3-enoyl-CoA as substrate. This chain is Fatty acid oxidation complex subunit alpha, found in Pseudomonas putida (strain ATCC 700007 / DSM 6899 / JCM 31910 / BCRC 17059 / LMG 24140 / F1).